A 95-amino-acid chain; its full sequence is Aspartyl/glutamyl-tRNA(Asn/Gln) amidotransferase subunit C (95 aa).

Belongs to the GatC family. As to quaternary structure, heterotrimer of A, B and C subunits.

The enzyme catalyses L-glutamyl-tRNA(Gln) + L-glutamine + ATP + H2O = L-glutaminyl-tRNA(Gln) + L-glutamate + ADP + phosphate + H(+). It carries out the reaction L-aspartyl-tRNA(Asn) + L-glutamine + ATP + H2O = L-asparaginyl-tRNA(Asn) + L-glutamate + ADP + phosphate + 2 H(+). In terms of biological role, allows the formation of correctly charged Asn-tRNA(Asn) or Gln-tRNA(Gln) through the transamidation of misacylated Asp-tRNA(Asn) or Glu-tRNA(Gln) in organisms which lack either or both of asparaginyl-tRNA or glutaminyl-tRNA synthetases. The reaction takes place in the presence of glutamine and ATP through an activated phospho-Asp-tRNA(Asn) or phospho-Glu-tRNA(Gln). The sequence is that of Aspartyl/glutamyl-tRNA(Asn/Gln) amidotransferase subunit C from Pelodictyon phaeoclathratiforme (strain DSM 5477 / BU-1).